A 482-amino-acid polypeptide reads, in one-letter code: UDP-N-acetylmuramate--L-alanine ligase (482 aa).

115-121 lines the ATP pocket; the sequence is GTHGKTT.

This sequence belongs to the MurCDEF family.

Its subcellular location is the cytoplasm. It catalyses the reaction UDP-N-acetyl-alpha-D-muramate + L-alanine + ATP = UDP-N-acetyl-alpha-D-muramoyl-L-alanine + ADP + phosphate + H(+). It functions in the pathway cell wall biogenesis; peptidoglycan biosynthesis. Its function is as follows. Cell wall formation. This Rhodospirillum centenum (strain ATCC 51521 / SW) protein is UDP-N-acetylmuramate--L-alanine ligase.